The sequence spans 121 residues: Large ribosomal subunit protein eL31 (121 aa).

It belongs to the eukaryotic ribosomal protein eL31 family.

This Perilla frutescens (Beefsteak mint) protein is Large ribosomal subunit protein eL31 (RPL31).